A 239-amino-acid polypeptide reads, in one-letter code: Ribonuclease 3 (239 aa).

Residues 12–137 form the RNase III domain; it reads ISRLEALIGY…LIATLYLDGG (126 aa). Glutamate 50 provides a ligand contact to Mg(2+). Residue aspartate 54 is part of the active site. Mg(2+)-binding residues include aspartate 123 and glutamate 126. Glutamate 126 is a catalytic residue. The region spanning 162–231 is the DRBM domain; it reads DAKTELQEWA…ATRLLEREGV (70 aa).

The protein belongs to the ribonuclease III family. As to quaternary structure, homodimer. Requires Mg(2+) as cofactor.

It localises to the cytoplasm. The enzyme catalyses Endonucleolytic cleavage to 5'-phosphomonoester.. Its function is as follows. Digests double-stranded RNA. Involved in the processing of primary rRNA transcript to yield the immediate precursors to the large and small rRNAs (23S and 16S). Processes some mRNAs, and tRNAs when they are encoded in the rRNA operon. Processes pre-crRNA and tracrRNA of type II CRISPR loci if present in the organism. In Agrobacterium fabrum (strain C58 / ATCC 33970) (Agrobacterium tumefaciens (strain C58)), this protein is Ribonuclease 3.